Consider the following 308-residue polypeptide: Ribonuclease HIII (308 aa).

The RNase H type-2 domain occupies 93-308 (MSVLGSDETG…ANTEKARKMI (216 aa)). A divalent metal cation is bound by residues D99, E100, and D204.

Belongs to the RNase HII family. RnhC subfamily. Mn(2+) serves as cofactor. It depends on Mg(2+) as a cofactor.

It localises to the cytoplasm. It catalyses the reaction Endonucleolytic cleavage to 5'-phosphomonoester.. Functionally, endonuclease that specifically degrades the RNA of RNA-DNA hybrids. This chain is Ribonuclease HIII, found in Lysinibacillus sphaericus (strain C3-41).